Consider the following 185-residue polypeptide: Elongation factor P (185 aa).

It belongs to the elongation factor P family.

The protein resides in the cytoplasm. It participates in protein biosynthesis; polypeptide chain elongation. In terms of biological role, involved in peptide bond synthesis. Stimulates efficient translation and peptide-bond synthesis on native or reconstituted 70S ribosomes in vitro. Probably functions indirectly by altering the affinity of the ribosome for aminoacyl-tRNA, thus increasing their reactivity as acceptors for peptidyl transferase. The sequence is that of Elongation factor P from Bordetella avium (strain 197N).